Here is a 195-residue protein sequence, read N- to C-terminus: Inner membrane-spanning protein YciB (195 aa).

5 helical membrane-spanning segments follow: residues 34–54, 65–85, 88–108, 131–151, and 160–180; these read IYGATATLILASVIVYGALWL, FTLGACLVLGGLTLAFHEDTF, WKAPLVNWLFALAFAGSHFIG, LNIAWVVFFLVCGFANLYVVF, and FKVFGSLGMTLLFLIGQGLFL.

Belongs to the YciB family.

It localises to the cell inner membrane. Its function is as follows. Plays a role in cell envelope biogenesis, maintenance of cell envelope integrity and membrane homeostasis. This Pseudomonas aeruginosa (strain LESB58) protein is Inner membrane-spanning protein YciB.